A 450-amino-acid polypeptide reads, in one-letter code: UDP-N-acetylmuramoylalanine--D-glutamate ligase (450 aa).

Residue 119–125 (GSNGKTT) coordinates ATP.

The protein belongs to the MurCDEF family.

The protein localises to the cytoplasm. The enzyme catalyses UDP-N-acetyl-alpha-D-muramoyl-L-alanine + D-glutamate + ATP = UDP-N-acetyl-alpha-D-muramoyl-L-alanyl-D-glutamate + ADP + phosphate + H(+). It participates in cell wall biogenesis; peptidoglycan biosynthesis. Functionally, cell wall formation. Catalyzes the addition of glutamate to the nucleotide precursor UDP-N-acetylmuramoyl-L-alanine (UMA). This is UDP-N-acetylmuramoylalanine--D-glutamate ligase from Streptococcus pneumoniae (strain Taiwan19F-14).